Consider the following 528-residue polypeptide: DNA primase large subunit (528 aa).

Positions Asn210–Arg239 are H-T-H-like motif. [4Fe-4S] cluster contacts are provided by Cys336, Cys417, Cys434, and Cys474.

It belongs to the eukaryotic-type primase large subunit family. As to quaternary structure, DNA polymerase alpha:primase is a four subunit enzyme complex, which is assembled throughout the cell cycle, and consists of the two DNA polymerase subunits A POL1 and B POL12, and the DNA primase large PRI2 and small PRI1 subunits. Interacts with MCM10. Requires [4Fe-4S] cluster as cofactor.

In terms of biological role, DNA primase is the polymerase that synthesizes small RNA primers for the Okazaki fragments made during discontinuous DNA replication. In a complex with DNA polymerase alpha (DNA polymerase alpha:primase) constitutes a replicative polymerase. Both primase components participate in formation of the active center, but the ATP-binding site is exclusively located on p48. The protein is DNA primase large subunit (PRI2) of Saccharomyces cerevisiae (strain ATCC 204508 / S288c) (Baker's yeast).